We begin with the raw amino-acid sequence, 280 residues long: Bifunctional protein FolD (280 aa).

NADP(+) contacts are provided by residues 165-167, serine 190, and isoleucine 231; that span reads GRS.

Belongs to the tetrahydrofolate dehydrogenase/cyclohydrolase family. Homodimer.

The enzyme catalyses (6R)-5,10-methylene-5,6,7,8-tetrahydrofolate + NADP(+) = (6R)-5,10-methenyltetrahydrofolate + NADPH. It carries out the reaction (6R)-5,10-methenyltetrahydrofolate + H2O = (6R)-10-formyltetrahydrofolate + H(+). It functions in the pathway one-carbon metabolism; tetrahydrofolate interconversion. Its function is as follows. Catalyzes the oxidation of 5,10-methylenetetrahydrofolate to 5,10-methenyltetrahydrofolate and then the hydrolysis of 5,10-methenyltetrahydrofolate to 10-formyltetrahydrofolate. This chain is Bifunctional protein FolD, found in Moorella thermoacetica (strain ATCC 39073 / JCM 9320).